We begin with the raw amino-acid sequence, 391 residues long: Chaperone protein DnaJ (391 aa).

Positions 6-70 constitute a J domain; the sequence is DYYEILEVSR…EKRKLYDTYG (65 aa). The CR-type zinc finger occupies 145 to 226; that stretch reads GCIKNVKYTR…CKSRRMVDEV (82 aa). The Zn(2+) site is built by cysteine 158, cysteine 161, cysteine 174, cysteine 177, cysteine 200, cysteine 203, cysteine 214, and cysteine 217. CXXCXGXG motif repeat units lie at residues 158–165, 174–181, 200–207, and 214–221; these read CPDCNGSG, CSDCNGEG, CPSCKGEG, and CKKCKSRR.

This sequence belongs to the DnaJ family. As to quaternary structure, homodimer. Zn(2+) is required as a cofactor.

It is found in the cytoplasm. Functionally, participates actively in the response to hyperosmotic and heat shock by preventing the aggregation of stress-denatured proteins and by disaggregating proteins, also in an autonomous, DnaK-independent fashion. Unfolded proteins bind initially to DnaJ; upon interaction with the DnaJ-bound protein, DnaK hydrolyzes its bound ATP, resulting in the formation of a stable complex. GrpE releases ADP from DnaK; ATP binding to DnaK triggers the release of the substrate protein, thus completing the reaction cycle. Several rounds of ATP-dependent interactions between DnaJ, DnaK and GrpE are required for fully efficient folding. Also involved, together with DnaK and GrpE, in the DNA replication of plasmids through activation of initiation proteins. The chain is Chaperone protein DnaJ from Mycoplasmoides gallisepticum (strain R(low / passage 15 / clone 2)) (Mycoplasma gallisepticum).